The chain runs to 917 residues: Transcriptional regulatory protein SEF1 (917 aa).

A disordered region spans residues M1–T88. Residues K13–L27 are compositionally biased toward pro residues. The span at S56–S70 shows a compositional bias: low complexity. Residues V71–P81 show a composition bias toward polar residues. The zn(2)-C6 fungal-type DNA-binding region spans C90–C120. A coiled-coil region spans residues R129–Q164. 2 disordered regions span residues N168–I212 and Q778–L849. Over residues S171–Q184 the composition is skewed to low complexity. Over residues R191 to I212 the composition is skewed to polar residues. Low complexity predominate over residues Q778–Q827.

In terms of assembly, interacts with SSN3 and SFU1. In terms of processing, phosphorylated by SSN3 under iron-depleted conditions which leads to nuclear localization.

The protein resides in the cytoplasm. The protein localises to the nucleus. Functionally, transcription factor which plays an essential role in virulence by activating the transcription of iron uptake genes such as FRE7 in iron-poor environments such as the host bloodstream and internal organs. Promotes commensalism in a mouse model of gastrointestinal infection. The sequence is that of Transcriptional regulatory protein SEF1 (SEF1) from Candida albicans (strain SC5314 / ATCC MYA-2876) (Yeast).